A 287-amino-acid chain; its full sequence is Ribonuclease Z (287 aa).

Zn(2+) contacts are provided by His64, His66, Asp68, His69, His124, Asp191, and His250. The active-site Proton acceptor is the Asp68.

This sequence belongs to the RNase Z family. As to quaternary structure, homodimer. Zn(2+) serves as cofactor.

It catalyses the reaction Endonucleolytic cleavage of RNA, removing extra 3' nucleotides from tRNA precursor, generating 3' termini of tRNAs. A 3'-hydroxy group is left at the tRNA terminus and a 5'-phosphoryl group is left at the trailer molecule.. Zinc phosphodiesterase, which displays some tRNA 3'-processing endonuclease activity. Probably involved in tRNA maturation, by removing a 3'-trailer from precursor tRNA. This Pyrobaculum neutrophilum (strain DSM 2338 / JCM 9278 / NBRC 100436 / V24Sta) (Thermoproteus neutrophilus) protein is Ribonuclease Z.